The primary structure comprises 311 residues: Solute carrier family 25 member 48 (311 aa).

Solcar repeat units follow at residues 3 to 86 (SFQL…TQRF), 101 to 205 (RTLS…LSEW), and 214 to 301 (PSPC…SLQA). A run of 6 helical transmembrane segments spans residues 9 to 29 (FAAG…LDTV), 61 to 81 (GMSF…GVFS), 107 to 127 (LLAS…VDLI), 189 to 209 (VPGY…ITPE), 217 to 237 (CAVW…ATPM), and 277 to 295 (ITVN…FLGY).

It belongs to the mitochondrial carrier (TC 2.A.29) family.

The protein resides in the mitochondrion inner membrane. The protein is Solute carrier family 25 member 48 (SLC25A48) of Homo sapiens (Human).